The chain runs to 415 residues: Squalene synthase clz20 (415 aa).

N-linked (GlcNAc...) asparagine glycosylation occurs at Asn114. Residues 395-415 (ADTMYLAVLVLGVFGVVAAIL) form a helical membrane-spanning segment.

It belongs to the phytoene/squalene synthase family. The cofactor is Mg(2+).

It is found in the membrane. The enzyme catalyses 2 (2E,6E)-farnesyl diphosphate + NADH + H(+) = squalene + 2 diphosphate + NAD(+). It carries out the reaction 2 (2E,6E)-farnesyl diphosphate + NADPH + H(+) = squalene + 2 diphosphate + NADP(+). Its pathway is terpene metabolism; lanosterol biosynthesis; lanosterol from farnesyl diphosphate: step 1/3. Its function is as follows. Squalene synthase; part of the gene cluster that mediates the biosynthesis of squalestatin S1 (SQS1, also known as zaragozic acid A), a heavily oxidized fungal polyketide that offers potent cholesterol lowering activity by targeting squalene synthase (SS). Catalyzes the condensation of 2 two farnesyl pyrophosphate moieties to form squalene. The presence of a gene encoding a squalene synthase supports the identification of the cluster as being responsible for SQS1 production and suggests a likely mechanism for self-resistance. The polypeptide is Squalene synthase clz20 (Cochliobolus lunatus (Filamentous fungus)).